Reading from the N-terminus, the 407-residue chain is Peptidase T (407 aa).

Residue H81 participates in Zn(2+) binding. D83 is a catalytic residue. Residue D142 coordinates Zn(2+). E176 functions as the Proton acceptor in the catalytic mechanism. Positions 177, 199, and 381 each coordinate Zn(2+).

It belongs to the peptidase M20B family. Zn(2+) serves as cofactor.

Its subcellular location is the cytoplasm. It carries out the reaction Release of the N-terminal residue from a tripeptide.. Functionally, cleaves the N-terminal amino acid of tripeptides. The chain is Peptidase T from Streptococcus pneumoniae (strain Hungary19A-6).